We begin with the raw amino-acid sequence, 514 residues long: Putative ribose/galactose/methyl galactoside import ATP-binding protein 3 (514 aa).

ABC transporter domains follow at residues 21-256 (LRLD…VGRT) and 267-512 (VPTD…SGRS). 53–60 (GENGAGKS) serves as a coordination point for ATP.

This sequence belongs to the ABC transporter superfamily. Carbohydrate importer 2 (CUT2) (TC 3.A.1.2) family.

It is found in the cell inner membrane. The enzyme catalyses D-ribose(out) + ATP + H2O = D-ribose(in) + ADP + phosphate + H(+). It catalyses the reaction D-galactose(out) + ATP + H2O = D-galactose(in) + ADP + phosphate + H(+). Its function is as follows. Part of an ABC transporter complex involved in carbohydrate import. Could be involved in ribose, galactose and/or methyl galactoside import. Responsible for energy coupling to the transport system. In Burkholderia cenocepacia (strain HI2424), this protein is Putative ribose/galactose/methyl galactoside import ATP-binding protein 3.